The chain runs to 197 residues: Nucleoid occlusion factor SlmA (197 aa).

An HTH tetR-type domain is found at 7 to 67 (INRREHILQC…GLIEFIEESL (61 aa)). Positions 30–49 (TTAKLASEVGVSEAALYRHF) form a DNA-binding region, H-T-H motif.

Belongs to the nucleoid occlusion factor SlmA family. Homodimer. Interacts with FtsZ.

Its subcellular location is the cytoplasm. The protein localises to the nucleoid. Its function is as follows. Required for nucleoid occlusion (NO) phenomenon, which prevents Z-ring formation and cell division over the nucleoid. Acts as a DNA-associated cell division inhibitor that binds simultaneously chromosomal DNA and FtsZ, and disrupts the assembly of FtsZ polymers. SlmA-DNA-binding sequences (SBS) are dispersed on non-Ter regions of the chromosome, preventing FtsZ polymerization at these regions. The polypeptide is Nucleoid occlusion factor SlmA (Shewanella oneidensis (strain ATCC 700550 / JCM 31522 / CIP 106686 / LMG 19005 / NCIMB 14063 / MR-1)).